The sequence spans 332 residues: 2-oxoglutarate-dependent dioxygenase ecdK (332 aa).

A Fe2OG dioxygenase domain is found at 178-294 (HASELRLNHY…RRSVAFFLKP (117 aa)). Fe cation is bound by residues His206, Asp208, and His266. Arg285 provides a ligand contact to 2-oxoglutarate.

The protein belongs to the iron/ascorbate-dependent oxidoreductase family. It depends on Fe(2+) as a cofactor.

The protein operates within antifungal biosynthesis. 2-oxoglutarate-dependent dioxygenase; part of the gene cluster that mediates the biosynthesis of echinocandin B, a fungal lipidated cyclic hexapeptide that acts as an antifungal agent. Linoleoyl-AMP, produced by the fatty-acyl-AMP ligase ecdI, is transferred to the initiation carrier domain (T0) of ecdA. The linoleoyl-S-phosphopantetheinyl-T0 is sequentially extended with L-ornithine, L-threonine, L-proline, L-homotyrosine, L-threonine, and 4R-methyl-L-proline to form the linear hexapeptide. Thereafter, the terminal condensation (C7) performs macrocyclization of the NRPS product and the cyclic scaffold is released from ecdA. All six of the amino acid residues are hydroxylated, including 4R,5R-dihydroxy-L-ornithine, 4R-hydroxyl-L-proline, 3S,4S-dihydroxy-L-homotyrosine, and 3S-hydroxyl-4S-methyl-L-prolin. In the pathway, all the hydroxylation reactions are proposed to occur following completion of the cyclic peptide, so the unhydroxylated precursor produced by ecdA will undergo six rounds of hydroxylation. Five hydroxylase genes (ecdG, ecdH, ecdK, htyE and htyF) are embedded within the echinocandin B (ecd) and L-homotyrosine (hty) clusters. This is 2-oxoglutarate-dependent dioxygenase ecdK from Aspergillus rugulosus (Emericella rugulosa).